The sequence spans 184 residues: Photosystem I assembly protein Ycf3 (184 aa).

3 TPR repeats span residues 31 to 64 (AFAY…DEDQ), 68 to 101 (SYTL…NSNL), and 131 to 164 (MEIS…APDN).

Belongs to the Ycf3 family.

The protein resides in the plastid. It localises to the chloroplast thylakoid membrane. Its function is as follows. Essential for the assembly of the photosystem I (PSI) complex. May act as a chaperone-like factor to guide the assembly of the PSI subunits. The chain is Photosystem I assembly protein Ycf3 from Thalassiosira pseudonana (Marine diatom).